Here is a 282-residue protein sequence, read N- to C-terminus: Putative SLC9B1-like protein SLC9B1P1 (282 aa).

Transmembrane regions (helical) follow at residues leucine 27–isoleucine 47, isoleucine 51–valine 71, glycine 87–histidine 107, isoleucine 135–valine 155, leucine 174–phenylalanine 194, isoleucine 198–alanine 218, and valine 239–glycine 259.

The protein belongs to the monovalent cation:proton antiporter 1 (CPA1) transporter (TC 2.A.36) family.

The protein localises to the membrane. The chain is Putative SLC9B1-like protein SLC9B1P1 (SLC9B1P1) from Homo sapiens (Human).